The chain runs to 1706 residues: Brefeldin A-inhibited guanine nucleotide-exchange protein 4 (1706 aa).

One can recognise an SEC7 domain in the interval 555-742 (MLEQRRAYKI…GSLYDRVVKE (188 aa)). Glu657 is an active-site residue.

In terms of assembly, homodimer.

The protein resides in the cytoplasm. It is found in the cytosol. The protein localises to the membrane. With respect to regulation, inhibited by brefeldin A. Functionally, activates the ARF proteins by exchanging bound GDP for free GTP. Plays a role in vesicular protein sorting. This is Brefeldin A-inhibited guanine nucleotide-exchange protein 4 (BIG4) from Arabidopsis thaliana (Mouse-ear cress).